The primary structure comprises 396 residues: MKLTKRNPILVLVNDFVIDSPLPTNLTYFWNFGSLLGVNLVILIISGLTLAMHYTPNTLLAFSSVEHIMRDVNNGWLLRYIHANGASFFFIWVYLHIGRNLYYGSYRSPRGLLWSIGVVIFILMMATAFIGYVLPWGQMSFWGATVITNLLSAIPWIGTDFVLFVWGGFSVDNATLNRFFSLHYLLPFILAALVVMHLLALHQDGSNNPEGISSSSDRLRFHPYFTSKDLVGFVWMAILLSIFVFFAPYYLGHPDNSIPANPLVTPHSIVPEWYFLPFYAILRAIPSKLGGVIAMFGALLILFPLALIHTNNVRSNRYRPLLNLLFWIFVFNFFVLLWVGAKPIAQPYILIGQISTIIYFLYFVILMILGCIMTYIYTKSNCFFIYFFLYFGCSIL.

Helical transmembrane passes span F32–M52, W76–G98, L113–V133, and F179–L199. Heme b is bound by residues H82 and H96. Heme b is bound by residues H183 and H197. H202 is an a ubiquinone binding site. Helical transmembrane passes span F225 to F245, L289 to H309, L321 to A341, and Y348 to I368.

It belongs to the cytochrome b family. Fungal cytochrome b-c1 complex contains 10 subunits; 3 respiratory subunits, 2 core proteins and 5 low-molecular weight proteins. Cytochrome b-c1 complex is a homodimer. The cofactor is heme b.

It is found in the mitochondrion inner membrane. Component of the ubiquinol-cytochrome c reductase complex (complex III or cytochrome b-c1 complex) that is part of the mitochondrial respiratory chain. The b-c1 complex mediates electron transfer from ubiquinol to cytochrome c. Contributes to the generation of a proton gradient across the mitochondrial membrane that is then used for ATP synthesis. The sequence is that of Cytochrome b (cob) from Spizellomyces punctatus.